We begin with the raw amino-acid sequence, 235 residues long: Protein GMH1 homolog (235 aa).

Residues Met-1–Asp-54 are Cytoplasmic-facing. A helical transmembrane segment spans residues Phe-55–Phe-75. The Lumenal segment spans residues Tyr-76–Thr-88. The chain crosses the membrane as a helical span at residues Phe-89–Ile-109. Residues Ala-110–Asn-140 lie on the Cytoplasmic side of the membrane. Residues Ser-141 to Thr-161 form a helical membrane-spanning segment. Residues Arg-162–Tyr-175 lie on the Lumenal side of the membrane. Residues Leu-176–Leu-196 form a helical membrane-spanning segment. Topologically, residues Lys-197–Ala-201 are cytoplasmic. A helical transmembrane segment spans residues Leu-202 to Val-222. The Lumenal segment spans residues Pro-223 to Ala-235.

This sequence belongs to the unc-50 family.

Its subcellular location is the endoplasmic reticulum membrane. Has a role in meiosis. The sequence is that of Protein GMH1 homolog (mug16) from Schizosaccharomyces pombe (strain 972 / ATCC 24843) (Fission yeast).